We begin with the raw amino-acid sequence, 548 residues long: Protoporphyrinogen oxidase, chloroplastic (548 aa).

Residues 1–50 (MTTTPIANHPNIFTHQSSSSPLAFLNRTSFIPFSSISKRNSVNCNGWRTR) constitute a chloroplast transit peptide. Residues 78 to 83 (GAGISG), 101 to 102 (EA), and 123 to 126 (GPNS) each bind FAD. Positions 265-279 (KERSSTPKAPRDPRL) are enriched in basic and acidic residues. The interval 265–287 (KERSSTPKAPRDPRLPKPKGQTV) is disordered. An FAD-binding site is contributed by 522 to 524 (VAL).

Belongs to the protoporphyrinogen/coproporphyrinogen oxidase family. Protoporphyrinogen oxidase subfamily. As to quaternary structure, homodimer. The cofactor is FAD.

The protein resides in the plastid. The protein localises to the chloroplast. It carries out the reaction protoporphyrinogen IX + 3 O2 = protoporphyrin IX + 3 H2O2. It functions in the pathway porphyrin-containing compound metabolism; protoporphyrin-IX biosynthesis; protoporphyrin-IX from protoporphyrinogen-IX: step 1/1. Its pathway is porphyrin-containing compound metabolism; chlorophyll biosynthesis. Functionally, catalyzes the 6-electron oxidation of protoporphyrinogen-IX to form protoporphyrin-IX. The chain is Protoporphyrinogen oxidase, chloroplastic (PPXI) from Nicotiana tabacum (Common tobacco).